Consider the following 127-residue polypeptide: Small ribosomal subunit protein bS6 (127 aa).

Positions 104–127 (QGAEKGKSSRKEKVAAEAEASEEA) are disordered. Residues 107-119 (EKGKSSRKEKVAA) are compositionally biased toward basic and acidic residues.

It belongs to the bacterial ribosomal protein bS6 family.

Functionally, binds together with bS18 to 16S ribosomal RNA. The protein is Small ribosomal subunit protein bS6 of Coxiella burnetii (strain CbuG_Q212) (Coxiella burnetii (strain Q212)).